A 478-amino-acid polypeptide reads, in one-letter code: UDP-N-acetylmuramate--L-alanine ligase (478 aa).

112–118 serves as a coordination point for ATP; it reads GTHGKTT.

It belongs to the MurCDEF family.

The protein localises to the cytoplasm. It catalyses the reaction UDP-N-acetyl-alpha-D-muramate + L-alanine + ATP = UDP-N-acetyl-alpha-D-muramoyl-L-alanine + ADP + phosphate + H(+). Its pathway is cell wall biogenesis; peptidoglycan biosynthesis. Functionally, cell wall formation. The chain is UDP-N-acetylmuramate--L-alanine ligase from Polynucleobacter asymbioticus (strain DSM 18221 / CIP 109841 / QLW-P1DMWA-1) (Polynucleobacter necessarius subsp. asymbioticus).